Here is a 265-residue protein sequence, read N- to C-terminus: Mlc titration factor A (265 aa).

The Zn(2+) site is built by His111, His148, His152, and Glu211.

It belongs to the MtfA family. Interacts with Mlc. Zn(2+) is required as a cofactor.

The protein resides in the cytoplasm. Its function is as follows. Involved in the modulation of the activity of the glucose-phosphotransferase system (glucose-PTS). Interacts with the transcriptional repressor Mlc, preventing its interaction with DNA and leading to the modulation of expression of genes regulated by Mlc, including ptsG, which encodes the PTS system glucose-specific EIICB component. Functionally, shows zinc-dependent metallopeptidase activity. This is Mlc titration factor A from Escherichia coli O9:H4 (strain HS).